A 67-amino-acid chain; its full sequence is Probable tautomerase K2 (67 aa).

The active-site Proton acceptor; via imino nitrogen is P2.

This sequence belongs to the 4-oxalocrotonate tautomerase family.

The polypeptide is Probable tautomerase K2 (Dickeya dadantii (strain 3937) (Erwinia chrysanthemi (strain 3937))).